The following is a 98-amino-acid chain: Defensin-B (98 aa).

The N-terminal stretch at 1-20 is a signal peptide; that stretch reads MKSITVICFLALCTVAITSA. The propeptide occupies 21 to 58; it reads YPQEPVLADEARPFANSLFDELPEETYQAAVENFRLKR. Intrachain disulfides connect cysteine 61/cysteine 88, cysteine 74/cysteine 94, and cysteine 78/cysteine 96.

It belongs to the invertebrate defensin family. Type 1 subfamily.

The protein resides in the secreted. In terms of biological role, antibacterial peptide mostly active against Gram-positive bacteria. The chain is Defensin-B (DEFB) from Aedes aegypti (Yellowfever mosquito).